We begin with the raw amino-acid sequence, 453 residues long: tRNA modification GTPase MnmE (453 aa).

(6S)-5-formyl-5,6,7,8-tetrahydrofolate contacts are provided by Arg22, Glu79, and Lys119. In terms of domain architecture, TrmE-type G spans 215 to 376; that stretch reads GMKVVIAGRP…LKQHLKSLMG (162 aa). Asn225 serves as a coordination point for K(+). GTP-binding positions include 225–230, 244–250, 269–272, and 334–337; these read NAGKSS, TEIAGTT, DTAG, and NKAD. Ser229 lines the Mg(2+) pocket. K(+)-binding residues include Thr244, Ile246, and Thr249. Thr250 serves as a coordination point for Mg(2+). Lys453 is a (6S)-5-formyl-5,6,7,8-tetrahydrofolate binding site.

It belongs to the TRAFAC class TrmE-Era-EngA-EngB-Septin-like GTPase superfamily. TrmE GTPase family. Homodimer. Heterotetramer of two MnmE and two MnmG subunits. K(+) is required as a cofactor.

Its subcellular location is the cytoplasm. Functionally, exhibits a very high intrinsic GTPase hydrolysis rate. Involved in the addition of a carboxymethylaminomethyl (cmnm) group at the wobble position (U34) of certain tRNAs, forming tRNA-cmnm(5)s(2)U34. This Shewanella halifaxensis (strain HAW-EB4) protein is tRNA modification GTPase MnmE.